A 186-amino-acid polypeptide reads, in one-letter code: MIRELEYYGSHILRRKADIIPEITDATRQLVQDMYETMVAHKGVGLAAPQVGESLSLFVMCVEGETEEGDLIFCDFPKVYINPVLSNPSEDLVIGREGCLSIPGLRADVYRPQSITVTAVNLDGQEFTEHLEGFPARIIMHENDHLHGVLYIDKMEEPKDIKKFKASLEKIRRRYHAHVKPEDRAS.

The Fe cation site is built by cysteine 99 and histidine 141. Residue glutamate 142 is part of the active site. Histidine 145 lines the Fe cation pocket.

It belongs to the polypeptide deformylase family. It depends on Fe(2+) as a cofactor.

It catalyses the reaction N-terminal N-formyl-L-methionyl-[peptide] + H2O = N-terminal L-methionyl-[peptide] + formate. Functionally, removes the formyl group from the N-terminal Met of newly synthesized proteins. Requires at least a dipeptide for an efficient rate of reaction. N-terminal L-methionine is a prerequisite for activity but the enzyme has broad specificity at other positions. The chain is Peptide deformylase from Chlamydia caviae (strain ATCC VR-813 / DSM 19441 / 03DC25 / GPIC) (Chlamydophila caviae).